A 548-amino-acid polypeptide reads, in one-letter code: Serine/threonine-protein phosphatase 2A 56 kDa regulatory subunit delta 1 isoform (548 aa).

Positions 1–10 (MKGIKSKMLS) are enriched in basic residues. The segment at 1 to 75 (MKGIKSKMLS…KKVPIDTTPT (75 aa)) is disordered. Positions 27–39 (KKSNSHDSSKAPK) are enriched in basic and acidic residues. Position 96 is a phosphotyrosine (Y96). Phosphoserine is present on residues S99, S109, and S542.

The protein belongs to the phosphatase 2A regulatory subunit B family. As to quaternary structure, PP2A consists of a common heterodimeric core enzyme, composed of a 36 kDa catalytic subunit (subunit C) and a 65 kDa constant regulatory subunit (PR65 or subunit A), that associates with a variety of regulatory subunits. Proteins that associate with the core dimer include three families of regulatory subunits B (the R2/B/PR55/B55, R3/B''/PR72/PR130/PR59 and R5/B'/B56 families), the 48 kDa variable regulatory subunit, viral proteins, and cell signaling molecules.

It localises to the cytoplasm. The protein resides in the nucleus. Its function is as follows. The B regulatory subunit might modulate substrate selectivity and catalytic activity, and might also direct the localization of the catalytic enzyme to a particular subcellular compartment. Has a role in cell shape control and septum formation. This chain is Serine/threonine-protein phosphatase 2A 56 kDa regulatory subunit delta 1 isoform (par1), found in Schizosaccharomyces pombe (strain 972 / ATCC 24843) (Fission yeast).